A 234-amino-acid chain; its full sequence is Cysteine proteinase inhibitor 6 (234 aa).

The N-terminal stretch at 1-24 (MMRSRFLLFIVFFSLSLFISSLIA) is a signal peptide. M2 bears the N-acetylalanine mark. 2 consecutive Cystatin domains span residues 38 to 126 (GGVG…KPAS) and 145 to 215 (SGWR…FKVE). The Secondary area of contact motif lies at 82–86 (QVVAG). Residues 133-154 (SSDLGCKQGEHESGWREVPGDD) are disordered. The segment covering 140–154 (QGEHESGWREVPGDD) has biased composition (basic and acidic residues). S174 carries the phosphoserine modification.

The protein belongs to the cystatin family. Phytocystatin subfamily.

Its subcellular location is the secreted. In terms of biological role, specific inhibitor of cysteine proteinases. Probably involved in the regulation of endogenous processes and in defense against pests and pathogens. This is Cysteine proteinase inhibitor 6 (CYS6) from Arabidopsis thaliana (Mouse-ear cress).